The primary structure comprises 355 residues: Enhancer of mRNA-decapping protein 1 (355 aa).

Disordered stretches follow at residues 1 to 146 (MSSD…VDGM), 210 to 230 (MSQPMSQPMSQPMSQPMSQPM), and 301 to 330 (NSTAKASVRSKGSPGSEGGSRRSQNWKSSQ). Residues 39–49 (AQKQQLPNGEQ) show a composition bias toward polar residues. Positions 57–67 (KQSRKRGSGRQ) are enriched in basic residues. Residues 91–110 (SIPSGSAGSESAQKETSAGQ) show a composition bias toward polar residues. The span at 123–142 (VPAGGPAGKSSSEPASASSA) shows a compositional bias: low complexity.

The protein belongs to the EDC family.

It localises to the cytoplasm. Its function is as follows. mRNA-binding protein which stimulates mRNA decapping. This Eremothecium gossypii (strain ATCC 10895 / CBS 109.51 / FGSC 9923 / NRRL Y-1056) (Yeast) protein is Enhancer of mRNA-decapping protein 1 (EDC1).